We begin with the raw amino-acid sequence, 379 residues long: Chaperone protein DnaJ (379 aa).

The J domain occupies 5–70; the sequence is DYYEVLGVQK…QKRAAYDRFG (66 aa). Residues 137 to 215 form a CR-type zinc finger; it reads GATTTVRVPT…CGGQGRVRKE (79 aa). 8 residues coordinate Zn(2+): Cys150, Cys153, Cys167, Cys170, Cys189, Cys192, Cys203, and Cys206. CXXCXGXG motif repeat units lie at residues 150–157, 167–174, 189–196, and 203–210; these read CESCNGTG, CPTCNGHG, CPACHGVG, and CRTCGGQG.

The protein belongs to the DnaJ family. As to quaternary structure, homodimer. Requires Zn(2+) as cofactor.

The protein localises to the cytoplasm. Functionally, participates actively in the response to hyperosmotic and heat shock by preventing the aggregation of stress-denatured proteins and by disaggregating proteins, also in an autonomous, DnaK-independent fashion. Unfolded proteins bind initially to DnaJ; upon interaction with the DnaJ-bound protein, DnaK hydrolyzes its bound ATP, resulting in the formation of a stable complex. GrpE releases ADP from DnaK; ATP binding to DnaK triggers the release of the substrate protein, thus completing the reaction cycle. Several rounds of ATP-dependent interactions between DnaJ, DnaK and GrpE are required for fully efficient folding. Also involved, together with DnaK and GrpE, in the DNA replication of plasmids through activation of initiation proteins. The chain is Chaperone protein DnaJ from Rhodospirillum centenum (strain ATCC 51521 / SW).